The sequence spans 335 residues: tRNA pseudouridine synthase D (335 aa).

The active-site Nucleophile is D77. The TRUD domain maps to 152–308; it reads GFPNYFTEQR…AQNLNWQFEP (157 aa).

This sequence belongs to the pseudouridine synthase TruD family.

It carries out the reaction uridine(13) in tRNA = pseudouridine(13) in tRNA. In terms of biological role, responsible for synthesis of pseudouridine from uracil-13 in transfer RNAs. This chain is tRNA pseudouridine synthase D, found in Actinobacillus succinogenes (strain ATCC 55618 / DSM 22257 / CCUG 43843 / 130Z).